A 36-amino-acid polypeptide reads, in one-letter code: Pancreatic polypeptide (36 aa).

At Tyr-36 the chain carries Tyrosine amide.

The protein belongs to the NPY family.

It localises to the secreted. In terms of biological role, hormone secreted by pancreatic cells that acts as a regulator of pancreatic and gastrointestinal functions probably by signaling through the G protein-coupled receptor NPY4R2. The sequence is that of Pancreatic polypeptide (PPY) from Macaca mulatta (Rhesus macaque).